The sequence spans 497 residues: MNYFPWLTLVVILPIAGGSLIFLFPHRGNKVIRWYTVCICLIDLLLTTYAFCYHFQLDDPLIQLTESYKWINFFDFYWRFGIDGLSIGPILLTGFITTLATLAAQPITRECKLFYFLMLAMYSGQIGPFSSRDILLFFIMWELELIPVYLLLAMWGGKKRLYSATKFILYTAGSSVFLLMATLGIGLYGSNEPTLNFETLNNQSYPLALEIIVYIGFLIAFAVKSPIIPLHTWLPDTHGEAHYSTCMLLAGILLKMGAYGLVRINMELFSHAHSIFCPWLMILGSIQIIYAASASLGQRNLKKRIAYSSVSHMGFLIIGIGSISDTGLNGAILQIISHGFIGAALFFLSGTSYDRLRLLYLDEMGGMALPMPKIFTVFTILSMASLALPGMSGFFAELIVFWGIITSQKYFLIMKILITFVTAIGMILTPIYSLSILRQMFYGYKFFNTPNSYFFDSGPRELFISISILIPIIGIGIYPDFIFSFSVDKVEAVLSHF.

Helical transmembrane passes span 4–24 (FPWL…IFLF), 35–55 (YTVC…CYHF), 84–104 (GLSI…TLAA), 111–131 (CKLF…PFSS), 134–154 (ILLF…LLAM), 167–187 (FILY…GIGL), 208–228 (ALEI…SPII), 242–262 (HYST…YGLV), 274–294 (SIFC…AASA), 305–325 (IAYS…SISD), 330–350 (GAIL…FLSG), 386–406 (LALP…GIIT), 411–431 (FLIM…LTPI), and 463–483 (FISI…DFIF).

This sequence belongs to the complex I subunit 4 family.

Its subcellular location is the plastid. It is found in the chloroplast thylakoid membrane. It carries out the reaction a plastoquinone + NADH + (n+1) H(+)(in) = a plastoquinol + NAD(+) + n H(+)(out). The enzyme catalyses a plastoquinone + NADPH + (n+1) H(+)(in) = a plastoquinol + NADP(+) + n H(+)(out). The polypeptide is NAD(P)H-quinone oxidoreductase chain 4, chloroplastic (ndhD) (Lotus japonicus (Lotus corniculatus var. japonicus)).